The chain runs to 373 residues: Glutamine synthetase (373 aa).

The residue at position 2 (A2) is an N-acetylalanine. The interval 2–25 (ATSASSHLNKGIKQVYMSLPQGEK) is required for glutamine-induced ubiquitination by CRL4(CRBN) and proteasomal degradation. An N6-acetyllysine mark is found at K11 and K14. Residues 24–106 (EKVQAMYIWI…VFCEVFKYNR (83 aa)) form the GS beta-grasp domain. Position 104 is a phosphotyrosine (Y104). The region spanning 113–373 (LRHTCKRIMD…TGDEPFQYKN (261 aa)) is the GS catalytic domain. E134 contacts ATP. Positions 134, 136, 196, and 203 each coordinate Mn(2+). 203–208 (EFQIGP) is an ATP binding site. 246–247 (NW) contacts L-glutamate. Residue H253 coordinates Mn(2+). Residues 255–257 (NFS), R319, and R324 contribute to the ATP site. Residue R319 participates in L-glutamate binding. 336–338 (YFE) provides a ligand contact to ADP. A Mn(2+)-binding site is contributed by E338. An L-glutamate-binding site is contributed by R340. Residue S343 is modified to Phosphoserine.

The protein belongs to the glutamine synthetase family. Decamer; composed of two pentamers. Interacts with PALMD. Interacts with RHOJ. Interacts with BEST2; this interaction tethers a fraction of GLUL to the membrane, causing a decrease of cytosolic glutamine synthase (GS) activity and inhibits the chloride channel activity of BEST2 by affecting the gating at the aperture in the absence of intracellular glutamate. The cofactor is Mg(2+). Mn(2+) serves as cofactor. In terms of processing, palmitoylated; undergoes autopalmitoylation. Acetylated by EP300/p300; acetylation is stimulated by increased glutamine levels and promotes ubiquitin-mediated proteasomal degradation. Post-translationally, ubiquitinated by ZNRF1. Ubiquitinated by the DCX (DDB1-CUL4-X-box) E3 ubiquitin-protein ligase complex called CRL4(CRBN), leading to proteasomal degradation.

It is found in the cytoplasm. The protein localises to the cytosol. The protein resides in the microsome. Its subcellular location is the mitochondrion. It localises to the cell membrane. It catalyses the reaction L-glutamate + NH4(+) + ATP = L-glutamine + ADP + phosphate + H(+). The catalysed reaction is L-cysteinyl-[protein] + hexadecanoyl-CoA = S-hexadecanoyl-L-cysteinyl-[protein] + CoA. Its activity is regulated as follows. Glutamine synthetase activity is inhibited by methionine sulfoximine (MSO). Its function is as follows. Glutamine synthetase that catalyzes the ATP-dependent conversion of glutamate and ammonia to glutamine. Its role depends on tissue localization: in the brain, it regulates the levels of toxic ammonia and converts neurotoxic glutamate to harmless glutamine, whereas in the liver, it is one of the enzymes responsible for the removal of ammonia. Plays a key role in ammonium detoxification during erythropoiesis: the glutamine synthetase activity is required to remove ammonium generated by porphobilinogen deaminase (HMBS) during heme biosynthesis to prevent ammonium accumulation and oxidative stress. Essential for proliferation of fetal skin fibroblasts. Independently of its glutamine synthetase activity, required for endothelial cell migration during vascular development. Involved in angiogenesis by regulating membrane localization and activation of the GTPase RHOJ, possibly by promoting RHOJ palmitoylation. May act as a palmitoyltransferase for RHOJ: able to autopalmitoylate and then transfer the palmitoyl group to RHOJ. Plays a role in ribosomal 40S subunit biogenesis. Through the interaction with BEST2, inhibits BEST2 channel activity by affecting the gating at the aperture in the absence of intracellular L-glutamate, but sensitizes BEST2 to intracellular L-glutamate, which promotes the opening of BEST2 and thus relieves its inhibitory effect on BEST2. This is Glutamine synthetase from Sus scrofa (Pig).